Reading from the N-terminus, the 314-residue chain is THAP domain-containing protein 11 (314 aa).

The segment at 1–80 (MPGFTCCVPG…TYTVRVPTIF (80 aa)) adopts a THAP-type zinc-finger fold. A disordered region spans residues 85 to 111 (VNERKVARRPAGAAAARRRQQQQQQQQ). Residues 93–111 (RPAGAAAARRRQQQQQQQQ) show a composition bias toward low complexity. An HCFC1-binding motif (HBM) motif is present at residues 243–246 (DHSY). The stretch at 255 to 305 (EELLRKLNEQRDILALMEVKMKEMKGSIRHLRLTEAKLREELREKDRLLAM) forms a coiled coil.

Belongs to the THAP11 family. Forms homodimers. Interacts via HBM with HCFC1. Forms a complex with HCFC1 and ZNF143. As to expression, expressed in skin fibroblasts.

The protein resides in the nucleus. The protein localises to the cytoplasm. In terms of biological role, transcription factor, which has both transcriptional activation and repression activities. Also modulates chromatin accessibility. In complex with HCFC1 and ZNF143, regulates the expression of several genes, including AP2S1, ESCO2, OPHN1, RBL1, UBXN8 and ZNF32. May regulate the expression of genes that encode both cytoplasmic and mitochondrial ribosomal proteins. Required for normal mitochondrial development and function. Regulates mitochondrial gene expression, including that of components of the electron transport chain. Involved in the maintainance of pluripotency in early embryonic cells, possibly through its action on mitochondrial maturation which is required to meet high energy demands of these cells. Required for early development of retina, preventing premature exit of retinal progenitor cells from the cell cycle. This effect may also be mediated by its action on mitochondria. Through the regulation of MMACHC gene expression, controls cobalamin metabolism. Required for normal brain development and neural precursor differentiation. Involved in cell growth. The polypeptide is THAP domain-containing protein 11 (THAP11) (Homo sapiens (Human)).